The primary structure comprises 230 residues: Demethylmenaquinone methyltransferase (230 aa).

S-adenosyl-L-methionine-binding positions include Thr57, Asp77, and 101–102 (DI).

It belongs to the class I-like SAM-binding methyltransferase superfamily. MenG/UbiE family.

It carries out the reaction a 2-demethylmenaquinol + S-adenosyl-L-methionine = a menaquinol + S-adenosyl-L-homocysteine + H(+). The protein operates within quinol/quinone metabolism; menaquinone biosynthesis; menaquinol from 1,4-dihydroxy-2-naphthoate: step 2/2. Its function is as follows. Methyltransferase required for the conversion of demethylmenaquinol (DMKH2) to menaquinol (MKH2). The protein is Demethylmenaquinone methyltransferase of Chlamydia pneumoniae (Chlamydophila pneumoniae).